The primary structure comprises 258 residues: Acyl-[acyl-carrier-protein]--UDP-N-acetylglucosamine O-acyltransferase (258 aa).

This sequence belongs to the transferase hexapeptide repeat family. LpxA subfamily. Homotrimer.

The protein resides in the cytoplasm. The catalysed reaction is a (3R)-hydroxyacyl-[ACP] + UDP-N-acetyl-alpha-D-glucosamine = a UDP-3-O-[(3R)-3-hydroxyacyl]-N-acetyl-alpha-D-glucosamine + holo-[ACP]. It functions in the pathway glycolipid biosynthesis; lipid IV(A) biosynthesis; lipid IV(A) from (3R)-3-hydroxytetradecanoyl-[acyl-carrier-protein] and UDP-N-acetyl-alpha-D-glucosamine: step 1/6. Involved in the biosynthesis of lipid A, a phosphorylated glycolipid that anchors the lipopolysaccharide to the outer membrane of the cell. This chain is Acyl-[acyl-carrier-protein]--UDP-N-acetylglucosamine O-acyltransferase, found in Alkalilimnicola ehrlichii (strain ATCC BAA-1101 / DSM 17681 / MLHE-1).